The chain runs to 350 residues: Induced myeloid leukemia cell differentiation protein Mcl-1 (350 aa).

Residues Lys-5 and Lys-40 each participate in a glycyl lysine isopeptide (Lys-Gly) (interchain with G-Cter in ubiquitin) cross-link. The segment at Glu-47–Pro-87 is disordered. Over residues Gly-50 to Ala-61 the composition is skewed to gly residues. A PEST-like region spans residues Arg-104–Tyr-175. Ser-121 bears the Phosphoserine mark. Lys-136 participates in a covalent cross-link: Glycyl lysine isopeptide (Lys-Gly) (interchain with G-Cter in ubiquitin). A disordered region spans residues Gly-148–Glu-171. The span at Ser-150 to Pro-161 shows a compositional bias: polar residues. The residue at position 159 (Ser-159) is a Phosphoserine; by GSK3-alpha and GSK3-beta. Phosphoserine is present on Ser-162. Thr-163 bears the Phosphothreonine; by MAPK mark. Glycyl lysine isopeptide (Lys-Gly) (interchain with G-Cter in ubiquitin) cross-links involve residues Lys-194 and Lys-197. Positions Ala-209–Asn-223 match the BH3 motif. Residues His-252 to Ala-272 carry the BH1 motif. Residues Asp-304–Phe-319 carry the BH2 motif. The chain crosses the membrane as a helical span at residues Ile-328–Leu-348.

The protein belongs to the Bcl-2 family. As to quaternary structure, interacts with HIF3A (via C-terminus domain). Interacts with BAD, BOK, BIK and BMF. Interacts with PMAIP1. Interacts with BBC3. Isoform 1 interacts with BAX, BAK1 and TPT1. Heterodimer of isoform 1 and isoform 2. Homodimers of isoform 1 or isoform 2 are not detected. Isoform 2 does not interact with pro-apoptotic BCL2-related proteins. Interacts with RTL10/BOP. Interacts with BCL2L11; may sequester BCL2L11 to prevent its pro-apoptotic activity. Interacts with GIMAP5 and HSPA8/HSC70; the interaction between HSPA8 and MCL1 is impaired in the absence of GIMAP5. Post-translationally, cleaved by CASP3 during apoptosis. In intact cells cleavage occurs preferentially after Asp-127, yielding a pro-apoptotic 28 kDa C-terminal fragment. In terms of processing, rapidly degraded in the absence of phosphorylation on Thr-163 in the PEST region. Phosphorylated on Ser-159, by GSK3, in response to IL3/interleukin-3 withdrawal. Phosphorylation at Ser-159 induces ubiquitination and proteasomal degradation, abrogating the anti-apoptotic activity. Treatment with taxol or okadaic acid induces phosphorylation on additional sites. Post-translationally, ubiquitinated. Ubiquitination is induced by phosphorylation at Ser-159. Deubiquitinated by USP20; leading to increased stability.

Its subcellular location is the membrane. It localises to the cytoplasm. It is found in the mitochondrion. The protein resides in the nucleus. The protein localises to the nucleoplasm. Involved in the regulation of apoptosis versus cell survival, and in the maintenance of viability but not of proliferation. Mediates its effects by interactions with a number of other regulators of apoptosis. Isoform 1 inhibits apoptosis. Isoform 2 promotes apoptosis. In Homo sapiens (Human), this protein is Induced myeloid leukemia cell differentiation protein Mcl-1 (MCL1).